The sequence spans 1025 residues: Multidrug resistance protein MdtC (1025 aa).

12 helical membrane passes run 3–23 (FFAL…AITL), 333–353 (EVEQ…FLFL), 360–380 (IIPA…MYLC), 387–407 (LSLM…IVVL), 431–451 (VGFT…PLLL), 463–483 (FAVT…TLTP), 528–548 (LVGV…ISIP), 853–873 (VILI…LYES), 875–895 (VHPL…LLAL), 897–917 (LFNA…IGIV), 953–973 (PIMM…LSGG), and 984–1004 (ITIV…TPVV).

The protein belongs to the resistance-nodulation-cell division (RND) (TC 2.A.6) family. MdtC subfamily. In terms of assembly, part of a tripartite efflux system composed of MdtA, MdtB and MdtC. MdtC forms a heteromultimer with MdtB.

Its subcellular location is the cell inner membrane. Its function is as follows. The MdtABC tripartite complex confers resistance against novobiocin and deoxycholate. In Escherichia coli O1:K1 / APEC, this protein is Multidrug resistance protein MdtC.